A 2167-amino-acid chain; its full sequence is Myosin-VIIa (2167 aa).

Residues 63–733 (QGVEDMISLG…HDLFLEQERD (671 aa)) form the Myosin motor domain. 156–163 (GESGAGKT) lines the ATP pocket. Actin-binding stretches follow at residues 612–634 (LDALMKTLSSCQPFFIRCIKPNE) and 712–726 (QLGHTKVFLKDAHDL). IQ domains lie at 736 to 758 (LTRKILILQRSIRGWVYRRRFLR), 759 to 788 (LRAAAITVQRFWKGYAQRKRYRNMRVGYMR), 805 to 827 (LRGHIVGLQAHARGYLVRREYGH), and 828 to 857 (KMWAVIKIQSHVRRMIAMRRYRKLRLEHKQ). Positions 886–919 (QHYRDRLHELERREIQEQLENRRRVEVNMNIIND) form a coiled coil. Positions 1008–1245 (YAKKALKHPL…PSWLELQATK (238 aa)) constitute a MyTH4 1 domain. Residues 1250–1560 (IMLPITFMDG…YFLDGLKKRS (311 aa)) form the FERM 1 domain. The SH3 domain maps to 1558 to 1627 (KRSKYVIALQ…PAETVYVLPT (70 aa)). 2 positions are modified to phosphoserine: Ser1651 and Ser1654. The MyTH4 2 domain occupies 1701-1849 (YSRDPIKAPL…PHQVEVEAIQ (149 aa)). In terms of domain architecture, FERM 2 spans 1855–2158 (IFHKVYFPDD…SYISLMLTNM (304 aa)). Thr2045 carries the post-translational modification Phosphothreonine.

This sequence belongs to the TRAFAC class myosin-kinesin ATPase superfamily. Myosin family. Homodimerizes in a two headed molecule through the formation of a coiled-coil rod. Homodimers motility is approximately 8-10 times slower than that of myosin V, and its step size is 30 nm, which is consistent with the presence of five IQ motifs in its neck region. Interacts with Cad99C (via the cytoplasmic domain). Interacts with zip and Sans. Expressed in the setae, micro- and macrochaetae on the head, thorax and wing.

It localises to the cytoplasm. The protein resides in the cell cortex. Its subcellular location is the cell projection. It is found in the microvillus. Functionally, myosins are actin-based motor molecules with ATPase activity. Unconventional myosins serve in intracellular movements: can function in cells as a single-molecule cargo transporter. A very slow and high-duty-ratio motor, may be suitable for tension maintenance of actin filaments. Their highly divergent tails are presumed to bind to membranous compartments, which would be moved relative to actin filaments. Plays a key role in the formation of cellular projections and other actin-based functions required for embryonic and larval viability. Necessary for auditory transduction: plays a role in Johnston's organ organization by functioning in scolopidial apical attachment and therefore to acoustic stimulus propagation from the antenna a2/a3 joint to transducing elements. Interaction with the myosin zip may be important for its function in scolopidial apical attachment. During oogenesis it has Cad99c-dependent and Cad99c-independent roles in regulating the shape and spacing of the follicle cell microvilli which secrete eggshell material such as the vitelline membrane. May be required for the normal expression of Cad99c in the follicle cell microvilli. The protein is Myosin-VIIa of Drosophila melanogaster (Fruit fly).